The sequence spans 264 residues: 3-methyl-2-oxobutanoate hydroxymethyltransferase (264 aa).

Mg(2+) contacts are provided by aspartate 45 and aspartate 84. Residues 45–46 (DS), aspartate 84, and lysine 112 contribute to the 3-methyl-2-oxobutanoate site. Glutamate 114 is a binding site for Mg(2+). Glutamate 181 functions as the Proton acceptor in the catalytic mechanism.

This sequence belongs to the PanB family. Homodecamer; pentamer of dimers. Requires Mg(2+) as cofactor.

It is found in the cytoplasm. It catalyses the reaction 3-methyl-2-oxobutanoate + (6R)-5,10-methylene-5,6,7,8-tetrahydrofolate + H2O = 2-dehydropantoate + (6S)-5,6,7,8-tetrahydrofolate. It functions in the pathway cofactor biosynthesis; (R)-pantothenate biosynthesis; (R)-pantoate from 3-methyl-2-oxobutanoate: step 1/2. Catalyzes the reversible reaction in which hydroxymethyl group from 5,10-methylenetetrahydrofolate is transferred onto alpha-ketoisovalerate to form ketopantoate. The protein is 3-methyl-2-oxobutanoate hydroxymethyltransferase of Escherichia coli O8 (strain IAI1).